We begin with the raw amino-acid sequence, 210 residues long: Stress-response A/B barrel domain-containing protein DABB1 (210 aa).

2 Stress-response A/B barrel domains span residues 5-100 (VEHV…AVDW) and 116-204 (IGKI…VVEF).

In terms of assembly, homodimer.

The protein localises to the cytoplasm. It is found in the cytosol. Functionally, involved in defense against fungal pathogens. Possesses antifungal activity against diverse pathogenic fungi. The chain is Stress-response A/B barrel domain-containing protein DABB1 from Arabidopsis thaliana (Mouse-ear cress).